A 794-amino-acid polypeptide reads, in one-letter code: Sucrose synthase (794 aa).

Residues 263–742 (MISRLLILSP…ALDRVASRYT (480 aa)) form a GT-B glycosyltransferase region.

Belongs to the glycosyltransferase 1 family. Homotetramer.

The enzyme catalyses an NDP-alpha-D-glucose + D-fructose = a ribonucleoside 5'-diphosphate + sucrose + H(+). It catalyses the reaction ADP-alpha-D-glucose + D-fructose = sucrose + ADP + H(+). With respect to regulation, inhibited by GDP over 10 mM and by over 2 mM MgCl(2). Its function is as follows. Catalyzes the reversible conversion of sucrose and a nucleotide disphosphate (NDP) into fructose and NDP-glucose; although the reaction is freely reversible in vitro, the physiological reaction seems to be sucrose cleavage. Unlike characterized plant enzymes prefers ADP as a cosubstrate, whereas plants prefer UDP. The KM for sucrose is 8-fold lower in the presence of ADP than UDP. Its preference for ADP over UDP suggests it may directly link sucrose and glycogen metabolism. The polypeptide is Sucrose synthase (ss2) (Nitrosomonas europaea (strain ATCC 19718 / CIP 103999 / KCTC 2705 / NBRC 14298)).